Here is a 508-residue protein sequence, read N- to C-terminus: Probable cytosol aminopeptidase (508 aa).

Mn(2+)-binding residues include Lys-274 and Asp-279. Residue Lys-286 is part of the active site. Residues Asp-297, Asp-356, and Glu-358 each contribute to the Mn(2+) site. Arg-360 is an active-site residue.

This sequence belongs to the peptidase M17 family. The cofactor is Mn(2+).

The protein localises to the cytoplasm. The enzyme catalyses Release of an N-terminal amino acid, Xaa-|-Yaa-, in which Xaa is preferably Leu, but may be other amino acids including Pro although not Arg or Lys, and Yaa may be Pro. Amino acid amides and methyl esters are also readily hydrolyzed, but rates on arylamides are exceedingly low.. The catalysed reaction is Release of an N-terminal amino acid, preferentially leucine, but not glutamic or aspartic acids.. Functionally, presumably involved in the processing and regular turnover of intracellular proteins. Catalyzes the removal of unsubstituted N-terminal amino acids from various peptides. This is Probable cytosol aminopeptidase from Paraburkholderia xenovorans (strain LB400).